Consider the following 782-residue polypeptide: Endonuclease MutS2 (782 aa).

Residue 336–343 (GPNTGGKT) coordinates ATP. The Smr domain maps to 707–782 (LDLRGYRYEE…GFGVTVAELK (76 aa)).

Belongs to the DNA mismatch repair MutS family. MutS2 subfamily. As to quaternary structure, homodimer. Binds to stalled ribosomes, contacting rRNA.

Endonuclease that is involved in the suppression of homologous recombination and thus may have a key role in the control of bacterial genetic diversity. In terms of biological role, acts as a ribosome collision sensor, splitting the ribosome into its 2 subunits. Detects stalled/collided 70S ribosomes which it binds and splits by an ATP-hydrolysis driven conformational change. Acts upstream of the ribosome quality control system (RQC), a ribosome-associated complex that mediates the extraction of incompletely synthesized nascent chains from stalled ribosomes and their subsequent degradation. Probably generates substrates for RQC. The polypeptide is Endonuclease MutS2 (Staphylococcus carnosus (strain TM300)).